The sequence spans 365 residues: MAVMAPRTLVLLLSGALALTQTWAGSHSMRYFSTSVSRPGRGEPRFIAVGYVDDTQFVRFDSDAASQRMEPRAPWIEQEGPEYWDRNTRNVKAHSQTDRVDLGTLRGYYNQSEDGSHTIQRMYGCDVGSDGRFLRGYQQDAYDGKDYIALNEDLRSWTAADMAAEITKRKWEAAHFAEQLRAYLEGTCVEWLRRHLENGKETLQRTDAPKTHMTHHAVSDHEAILRCWALSFYPAEITLTWQRDGEDQTQDTELVETRPAGDGTFQKWAAVVVPSGQEQRYTCHVQHEGLPEPLTLRWEPSSQPTIPIVGIIAGLVLFGAVIAGAVVAAVRWRRKSSDRKGGSYSQAASSDSAQGSDVSLTACKV.

The signal sequence occupies residues 1 to 24; the sequence is MAVMAPRTLVLLLSGALALTQTWA. An alpha-1 region spans residues 25 to 114; the sequence is GSHSMRYFST…LRGYYNQSED (90 aa). The Extracellular segment spans residues 25–308; sequence GSHSMRYFST…EPSSQPTIPI (284 aa). Asn-110 is a glycosylation site (N-linked (GlcNAc...) asparagine). Residues 115–206 form an alpha-2 region; sequence GSHTIQRMYG…ENGKETLQRT (92 aa). 2 cysteine pairs are disulfide-bonded: Cys-125/Cys-188 and Cys-227/Cys-283. The tract at residues 207 to 298 is alpha-3; the sequence is DAPKTHMTHH…GLPEPLTLRW (92 aa). Residues 209–297 form the Ig-like C1-type domain; sequence PKTHMTHHAV…EGLPEPLTLR (89 aa). The segment at 299-308 is connecting peptide; it reads EPSSQPTIPI. A helical transmembrane segment spans residues 309–332; that stretch reads VGIIAGLVLFGAVIAGAVVAAVRW. Residues 333–365 lie on the Cytoplasmic side of the membrane; sequence RRKSSDRKGGSYSQAASSDSAQGSDVSLTACKV. Residues 338-365 are disordered; the sequence is DRKGGSYSQAASSDSAQGSDVSLTACKV. Residues 342 to 359 show a composition bias toward low complexity; it reads GSYSQAASSDSAQGSDVS. Residue Ser-343 is modified to Phosphoserine. Phosphotyrosine is present on Tyr-344. Residues Ser-345, Ser-349, Ser-350, Ser-352, Ser-356, and Ser-359 each carry the phosphoserine modification.

It belongs to the MHC class I family. As to quaternary structure, heterodimer of an alpha chain and a beta chain (beta-2-microglobulin).

The protein resides in the membrane. In terms of biological role, involved in the presentation of foreign antigens to the immune system. The polypeptide is Class I histocompatibility antigen, Gogo-A*0101 alpha chain (Gorilla gorilla gorilla (Western lowland gorilla)).